The following is a 560-amino-acid chain: Hemocyanin, units G and H (560 aa).

A disulfide bridge links C1 with C11. The interval 1 to 184 is unit G; the sequence is CPTPDAPQYA…AKGLVSQHIE (184 aa). The 2'-(S-cysteinyl)-histidine (Cys-His) cross-link spans 12–14; sequence CLH. Cysteines 93 and 98 form a disulfide. N142 carries N-linked (GlcNAc...) asparagine glycosylation. Residues 185 to 560 form a unit H region; it reads DHDTETLIRK…KPGTGTQLTR (376 aa). H230 is a Cu cation binding site. The cysteines at positions 236 and 246 are disulfide-linked. An N-linked (GlcNAc...) asparagine glycan is attached at N240. The 2'-(S-cysteinyl)-histidine (Cys-His) cross-link spans 247-249; it reads CQH. The Cu cation site is built by H249, H258, H358, H362, and H389. Intrachain disulfides connect C348/C415 and C476/C482.

Belongs to the tyrosinase family. Hemocyanin subfamily. As to quaternary structure, decamers of large identical subunits (390 kDa), each containing 8 globular oxygen-binding functional units. It depends on Cu(2+) as a cofactor.

Functionally, hemocyanins are copper-containing oxygen carriers occurring freely dissolved in the hemolymph of many mollusks and arthropods. This Sepia officinalis (Common cuttlefish) protein is Hemocyanin, units G and H.